Reading from the N-terminus, the 464-residue chain is Sensor histidine kinase Hik34 (464 aa).

In terms of domain architecture, Histidine kinase spans 235 to 449 (ALTHEVRTPL…ILTIYLKCEQ (215 aa)). Histidine 238 is modified (phosphohistidine; by autocatalysis).

In terms of processing, when expressed in E.coli autophosphorylates at 18 to 30 degrees Celsius; less phosphorylation occurs at 36 and none occurs at 42 or 48 degrees Celsius.

It carries out the reaction ATP + protein L-histidine = ADP + protein N-phospho-L-histidine.. Its function is as follows. Member of a two-component system Hik34/Rre1, controlling expression of at least 20 genes in response to hyperosmotic stress (0.5 M sorbitol) or salt (0.5 M NaCl). Represses expression of heat shock genes under normal growth conditions. Required for survival of long-term heat shock exposure. The sequence is that of Sensor histidine kinase Hik34 from Synechocystis sp. (strain ATCC 27184 / PCC 6803 / Kazusa).